The following is a 355-amino-acid chain: Ribosomal RNA large subunit methyltransferase M (355 aa).

S-adenosyl-L-methionine-binding positions include S183, 216–219 (SPGG), D235, D255, and D271. K300 acts as the Proton acceptor in catalysis.

The protein belongs to the class I-like SAM-binding methyltransferase superfamily. RNA methyltransferase RlmE family. RlmM subfamily. Monomer.

The protein resides in the cytoplasm. It carries out the reaction cytidine(2498) in 23S rRNA + S-adenosyl-L-methionine = 2'-O-methylcytidine(2498) in 23S rRNA + S-adenosyl-L-homocysteine + H(+). Catalyzes the 2'-O-methylation at nucleotide C2498 in 23S rRNA. The sequence is that of Ribosomal RNA large subunit methyltransferase M from Pseudomonas putida (strain W619).